A 55-amino-acid polypeptide reads, in one-letter code: Cop-6 protein (55 aa).

The protein belongs to the transcriptional regulatory CopG/NikR family.

Functionally, acts in trans as a negative regulatory element in pE194 replication. The sequence is that of Cop-6 protein from Staphylococcus aureus.